We begin with the raw amino-acid sequence, 87 residues long: Small ribosomal subunit protein uS15 (87 aa).

It belongs to the universal ribosomal protein uS15 family. As to quaternary structure, part of the 30S ribosomal subunit. Forms a bridge to the 50S subunit in the 70S ribosome, contacting the 23S rRNA.

Its function is as follows. One of the primary rRNA binding proteins, it binds directly to 16S rRNA where it helps nucleate assembly of the platform of the 30S subunit by binding and bridging several RNA helices of the 16S rRNA. Functionally, forms an intersubunit bridge (bridge B4) with the 23S rRNA of the 50S subunit in the ribosome. The protein is Small ribosomal subunit protein uS15 of Alkaliphilus metalliredigens (strain QYMF).